The chain runs to 141 residues: Putative RING-H2 finger protein ATL62 (141 aa).

A helical membrane pass occupies residues 14–32 (FFAILTVFYSIFRCCLAYC). Residues 79–121 (CVVCLSKFIDEDKARVLPSCNHCFHFDFTDTWLHSDYTCPNCR) form an RING-type; degenerate zinc finger.

It belongs to the RING-type zinc finger family. ATL subfamily.

It localises to the membrane. The catalysed reaction is S-ubiquitinyl-[E2 ubiquitin-conjugating enzyme]-L-cysteine + [acceptor protein]-L-lysine = [E2 ubiquitin-conjugating enzyme]-L-cysteine + N(6)-ubiquitinyl-[acceptor protein]-L-lysine.. Its pathway is protein modification; protein ubiquitination. In Arabidopsis thaliana (Mouse-ear cress), this protein is Putative RING-H2 finger protein ATL62 (ATL62).